The primary structure comprises 218 residues: Putative glutamine transport system permease protein GlnP (218 aa).

The ABC transmembrane type-1 domain maps to 19–208 (TLVTLKYSII…ILVMLISFIA (190 aa)). 4 helical membrane-spanning segments follow: residues 25-45 (YSII…ICKV), 57-79 (FYTS…FAAP), 86-108 (FSVF…SEVI), and 187-207 (FFPM…ISFI).

It belongs to the binding-protein-dependent transport system permease family. HisMQ subfamily.

It is found in the cell inner membrane. In terms of biological role, part of the binding-protein-dependent transport system for glutamine; probably responsible for the translocation of the substrate across the membrane. In Rickettsia typhi (strain ATCC VR-144 / Wilmington), this protein is Putative glutamine transport system permease protein GlnP (glnP).